A 287-amino-acid chain; its full sequence is Formamidopyrimidine-DNA glycosylase (287 aa).

P2 functions as the Schiff-base intermediate with DNA in the catalytic mechanism. E3 (proton donor) is an active-site residue. K58 functions as the Proton donor; for beta-elimination activity in the catalytic mechanism. Residues H104, R123, and R166 each contribute to the DNA site. An FPG-type zinc finger spans residues 251–287 (RVYDREGQPCPTPGCKGMIGREVQAGRSTFFCPVCQV). R277 (proton donor; for delta-elimination activity) is an active-site residue.

Belongs to the FPG family. As to quaternary structure, monomer. Requires Zn(2+) as cofactor.

It catalyses the reaction Hydrolysis of DNA containing ring-opened 7-methylguanine residues, releasing 2,6-diamino-4-hydroxy-5-(N-methyl)formamidopyrimidine.. It carries out the reaction 2'-deoxyribonucleotide-(2'-deoxyribose 5'-phosphate)-2'-deoxyribonucleotide-DNA = a 3'-end 2'-deoxyribonucleotide-(2,3-dehydro-2,3-deoxyribose 5'-phosphate)-DNA + a 5'-end 5'-phospho-2'-deoxyribonucleoside-DNA + H(+). Functionally, involved in base excision repair of DNA damaged by oxidation or by mutagenic agents. Acts as a DNA glycosylase that recognizes and removes damaged bases. Has a preference for oxidized purines, such as 7,8-dihydro-8-oxoguanine (8-oxoG). Has AP (apurinic/apyrimidinic) lyase activity and introduces nicks in the DNA strand. Cleaves the DNA backbone by beta-delta elimination to generate a single-strand break at the site of the removed base with both 3'- and 5'-phosphates. The polypeptide is Formamidopyrimidine-DNA glycosylase (Caulobacter sp. (strain K31)).